The sequence spans 155 residues: SsrA-binding protein (155 aa).

Belongs to the SmpB family.

It localises to the cytoplasm. Functionally, required for rescue of stalled ribosomes mediated by trans-translation. Binds to transfer-messenger RNA (tmRNA), required for stable association of tmRNA with ribosomes. tmRNA and SmpB together mimic tRNA shape, replacing the anticodon stem-loop with SmpB. tmRNA is encoded by the ssrA gene; the 2 termini fold to resemble tRNA(Ala) and it encodes a 'tag peptide', a short internal open reading frame. During trans-translation Ala-aminoacylated tmRNA acts like a tRNA, entering the A-site of stalled ribosomes, displacing the stalled mRNA. The ribosome then switches to translate the ORF on the tmRNA; the nascent peptide is terminated with the 'tag peptide' encoded by the tmRNA and targeted for degradation. The ribosome is freed to recommence translation, which seems to be the essential function of trans-translation. This chain is SsrA-binding protein, found in Streptococcus equi subsp. zooepidemicus (strain H70).